The chain runs to 441 residues: Zinc finger and BTB domain-containing protein 26 (441 aa).

In terms of domain architecture, BTB spans 33 to 97 (CDVTVLIDDI…CYSGVLEFPE (65 aa)). The segment at 134-177 (DSKEGCEPQSASPQSKEQQGDARGSPKQDSPCIHPSEDSMDMED) is disordered. Residue lysine 184 forms a Glycyl lysine isopeptide (Lys-Gly) (interchain with G-Cter in SUMO2) linkage. A disordered region spans residues 194–216 (VRSKKDQNQFISSEPTALHSSEP). The segment covering 201-216 (NQFISSEPTALHSSEP) has biased composition (polar residues). Lysine 255 participates in a covalent cross-link: Glycyl lysine isopeptide (Lys-Gly) (interchain with G-Cter in SUMO2). 4 consecutive C2H2-type zinc fingers follow at residues 273–295 (HQCP…LKMH), 298–320 (FMCL…MRVH), 326–348 (FQCK…LNLH), and 354–377 (HKCN…KQLH). Residue lysine 329 forms a Glycyl lysine isopeptide (Lys-Gly) (interchain with G-Cter in SUMO2) linkage.

As to expression, ubiquitous.

Its subcellular location is the nucleus. In terms of biological role, may be involved in transcriptional regulation. The sequence is that of Zinc finger and BTB domain-containing protein 26 (ZBTB26) from Homo sapiens (Human).